The chain runs to 223 residues: 7-cyano-7-deazaguanine synthase (223 aa).

An ATP-binding site is contributed by 15 to 25; it reads FSGGQDSTTCL. The Zn(2+) site is built by cysteine 191, cysteine 200, cysteine 203, and cysteine 206.

This sequence belongs to the QueC family. As to quaternary structure, homodimer. The cofactor is Zn(2+).

The catalysed reaction is 7-carboxy-7-deazaguanine + NH4(+) + ATP = 7-cyano-7-deazaguanine + ADP + phosphate + H2O + H(+). The protein operates within purine metabolism; 7-cyano-7-deazaguanine biosynthesis. Catalyzes the ATP-dependent conversion of 7-carboxy-7-deazaguanine (CDG) to 7-cyano-7-deazaguanine (preQ(0)). This is 7-cyano-7-deazaguanine synthase from Staphylococcus epidermidis (strain ATCC 35984 / DSM 28319 / BCRC 17069 / CCUG 31568 / BM 3577 / RP62A).